A 453-amino-acid chain; its full sequence is Dibenzothiophene-sulfone monooxygenase (453 aa).

Positions 59, 106, 156, 160, and 231 each coordinate FMN.

It belongs to the NtaA/SnaA/DszA monooxygenase family. In terms of assembly, homodimer.

It is found in the cytoplasm. The enzyme catalyses dibenzothiophene 5,5-dioxide + FMNH2 + NADH + O2 = 2'-hydroxybiphenyl-2-sulfinate + FMN + NAD(+) + H2O + H(+). It functions in the pathway sulfur metabolism; dibenzothiophene degradation. Catalyzes the second step of the '4S' desulfurization pathway that removes covalently bound sulfur from dibenzothiophene (DBT) without breaking carbon-carbon bonds. Metabolizes DBT-sulfone (DBTO2 or DBT 5,5-dioxide) to 2-(2'-hydroxyphenyl)benzene sulphinate (HBPS). The sequence is that of Dibenzothiophene-sulfone monooxygenase from Rhodococcus erythropolis (Arthrobacter picolinophilus).